We begin with the raw amino-acid sequence, 475 residues long: ATP synthase subunit beta, chloroplastic (475 aa).

155-162 (GGAGVGKT) is an ATP binding site.

It belongs to the ATPase alpha/beta chains family. F-type ATPases have 2 components, CF(1) - the catalytic core - and CF(0) - the membrane proton channel. CF(1) has five subunits: alpha(3), beta(3), gamma(1), delta(1), epsilon(1). CF(0) has four main subunits: a(1), b(1), b'(1) and c(9-12).

The protein resides in the plastid. The protein localises to the chloroplast thylakoid membrane. It catalyses the reaction ATP + H2O + 4 H(+)(in) = ADP + phosphate + 5 H(+)(out). Functionally, produces ATP from ADP in the presence of a proton gradient across the membrane. The catalytic sites are hosted primarily by the beta subunits. The protein is ATP synthase subunit beta, chloroplastic of Ochrosphaera neapolitana.